Consider the following 78-residue polypeptide: Putative membrane protein insertion efficiency factor (78 aa).

It belongs to the UPF0161 family.

The protein resides in the cell membrane. Could be involved in insertion of integral membrane proteins into the membrane. The protein is Putative membrane protein insertion efficiency factor of Bacillus thuringiensis subsp. konkukian (strain 97-27).